We begin with the raw amino-acid sequence, 208 residues long: Protein GrpE (208 aa).

A compositionally biased stretch (basic and acidic residues) spans Met1–Ala25. The disordered stretch occupies residues Met1–Ser38. Residues Asn29 to Ser38 are compositionally biased toward acidic residues.

The protein belongs to the GrpE family. Homodimer.

It localises to the cytoplasm. Functionally, participates actively in the response to hyperosmotic and heat shock by preventing the aggregation of stress-denatured proteins, in association with DnaK and GrpE. It is the nucleotide exchange factor for DnaK and may function as a thermosensor. Unfolded proteins bind initially to DnaJ; upon interaction with the DnaJ-bound protein, DnaK hydrolyzes its bound ATP, resulting in the formation of a stable complex. GrpE releases ADP from DnaK; ATP binding to DnaK triggers the release of the substrate protein, thus completing the reaction cycle. Several rounds of ATP-dependent interactions between DnaJ, DnaK and GrpE are required for fully efficient folding. This Clostridium perfringens (strain ATCC 13124 / DSM 756 / JCM 1290 / NCIMB 6125 / NCTC 8237 / Type A) protein is Protein GrpE.